We begin with the raw amino-acid sequence, 375 residues long: Anhydro-N-acetylmuramic acid kinase (375 aa).

14–21 (GTSMDGAD) is an ATP binding site.

It belongs to the anhydro-N-acetylmuramic acid kinase family.

The catalysed reaction is 1,6-anhydro-N-acetyl-beta-muramate + ATP + H2O = N-acetyl-D-muramate 6-phosphate + ADP + H(+). It participates in amino-sugar metabolism; 1,6-anhydro-N-acetylmuramate degradation. It functions in the pathway cell wall biogenesis; peptidoglycan recycling. Its function is as follows. Catalyzes the specific phosphorylation of 1,6-anhydro-N-acetylmuramic acid (anhMurNAc) with the simultaneous cleavage of the 1,6-anhydro ring, generating MurNAc-6-P. Is required for the utilization of anhMurNAc either imported from the medium or derived from its own cell wall murein, and thus plays a role in cell wall recycling. The protein is Anhydro-N-acetylmuramic acid kinase of Cupriavidus pinatubonensis (strain JMP 134 / LMG 1197) (Cupriavidus necator (strain JMP 134)).